We begin with the raw amino-acid sequence, 474 residues long: tRNA-2-methylthio-N(6)-dimethylallyladenosine synthase (474 aa).

The 118-residue stretch at 3–120 (KKLHIKTWGC…LPEMINSVRG (118 aa)) folds into the MTTase N-terminal domain. Residues C12, C49, C83, C157, C161, and C164 each contribute to the [4Fe-4S] cluster site. The 236-residue stretch at 143–378 (RADGPSAFVS…INQQVTAWSR (236 aa)) folds into the Radical SAM core domain. Residues 378-441 (RRMLGTTQRI…TNSMRGKVVR (64 aa)) form the TRAM domain.

The protein belongs to the methylthiotransferase family. MiaB subfamily. As to quaternary structure, monomer. [4Fe-4S] cluster is required as a cofactor.

The protein resides in the cytoplasm. It catalyses the reaction N(6)-dimethylallyladenosine(37) in tRNA + (sulfur carrier)-SH + AH2 + 2 S-adenosyl-L-methionine = 2-methylsulfanyl-N(6)-dimethylallyladenosine(37) in tRNA + (sulfur carrier)-H + 5'-deoxyadenosine + L-methionine + A + S-adenosyl-L-homocysteine + 2 H(+). Its function is as follows. Catalyzes the methylthiolation of N6-(dimethylallyl)adenosine (i(6)A), leading to the formation of 2-methylthio-N6-(dimethylallyl)adenosine (ms(2)i(6)A) at position 37 in tRNAs that read codons beginning with uridine. The chain is tRNA-2-methylthio-N(6)-dimethylallyladenosine synthase from Enterobacter sp. (strain 638).